The primary structure comprises 147 residues: UPF0306 protein YhbP (147 aa).

It belongs to the UPF0306 family.

In Salmonella choleraesuis (strain SC-B67), this protein is UPF0306 protein YhbP.